Reading from the N-terminus, the 452-residue chain is Bifunctional protein GlmU (452 aa).

Positions 1-226 are pyrophosphorylase; it reads MNFSAVILAA…PIEVEGVNDR (226 aa). UDP-N-acetyl-alpha-D-glucosamine contacts are provided by residues 8–11, Lys22, Gln73, 78–79, 100–102, Gly137, Glu151, Asn166, and Asn224; these read LAAG, GT, and YGD. Asp102 contacts Mg(2+). Residue Asn224 participates in Mg(2+) binding. The tract at residues 227 to 247 is linker; it reads AQLARLERAYQAAQAQKLLEQ. Residues 248–452 are N-acetyltransferase; sequence GVMLRDPSRF…IANWQRPTKK (205 aa). Residues Arg330 and Lys348 each coordinate UDP-N-acetyl-alpha-D-glucosamine. His360 functions as the Proton acceptor in the catalytic mechanism. UDP-N-acetyl-alpha-D-glucosamine is bound by residues Tyr363 and Asn374. Acetyl-CoA contacts are provided by residues Ala377, 383 to 384, Ser402, Ala420, and Arg437; that span reads NY.

This sequence in the N-terminal section; belongs to the N-acetylglucosamine-1-phosphate uridyltransferase family. In the C-terminal section; belongs to the transferase hexapeptide repeat family. Homotrimer. Mg(2+) is required as a cofactor.

It is found in the cytoplasm. It carries out the reaction alpha-D-glucosamine 1-phosphate + acetyl-CoA = N-acetyl-alpha-D-glucosamine 1-phosphate + CoA + H(+). The catalysed reaction is N-acetyl-alpha-D-glucosamine 1-phosphate + UTP + H(+) = UDP-N-acetyl-alpha-D-glucosamine + diphosphate. It participates in nucleotide-sugar biosynthesis; UDP-N-acetyl-alpha-D-glucosamine biosynthesis; N-acetyl-alpha-D-glucosamine 1-phosphate from alpha-D-glucosamine 6-phosphate (route II): step 2/2. Its pathway is nucleotide-sugar biosynthesis; UDP-N-acetyl-alpha-D-glucosamine biosynthesis; UDP-N-acetyl-alpha-D-glucosamine from N-acetyl-alpha-D-glucosamine 1-phosphate: step 1/1. The protein operates within bacterial outer membrane biogenesis; LPS lipid A biosynthesis. Functionally, catalyzes the last two sequential reactions in the de novo biosynthetic pathway for UDP-N-acetylglucosamine (UDP-GlcNAc). The C-terminal domain catalyzes the transfer of acetyl group from acetyl coenzyme A to glucosamine-1-phosphate (GlcN-1-P) to produce N-acetylglucosamine-1-phosphate (GlcNAc-1-P), which is converted into UDP-GlcNAc by the transfer of uridine 5-monophosphate (from uridine 5-triphosphate), a reaction catalyzed by the N-terminal domain. The protein is Bifunctional protein GlmU of Aliivibrio fischeri (strain ATCC 700601 / ES114) (Vibrio fischeri).